A 195-amino-acid chain; its full sequence is Glycerol-3-phosphate acyltransferase 1 (195 aa).

5 helical membrane passes run 6-26, 52-72, 74-94, 117-137, and 168-188; these read VILT…GHFL, LGIA…FLVV, LGLK…AVAG, LAVY…LTFL, and FGLG…ISLF.

The protein belongs to the PlsY family. Probably interacts with PlsX.

Its subcellular location is the cell membrane. The enzyme catalyses an acyl phosphate + sn-glycerol 3-phosphate = a 1-acyl-sn-glycero-3-phosphate + phosphate. The protein operates within lipid metabolism; phospholipid metabolism. Catalyzes the transfer of an acyl group from acyl-phosphate (acyl-PO(4)) to glycerol-3-phosphate (G3P) to form lysophosphatidic acid (LPA). This enzyme utilizes acyl-phosphate as fatty acyl donor, but not acyl-CoA or acyl-ACP. The polypeptide is Glycerol-3-phosphate acyltransferase 1 (Moorella thermoacetica (strain ATCC 39073 / JCM 9320)).